The sequence spans 232 residues: Histone H1.X (232 aa).

The H15 domain maps to 36–112 (HHPSYMDMIK…GATGSFRMGK (77 aa)). A disordered region spans residues 142-232 (ISKAEKTKPS…LRTGTRKSYC (91 aa)). Residues 159–197 (KKGKPISTMKKRGVMSKKRSSKNKMAPKAKSHGLKKKGP) are compositionally biased toward basic residues.

This sequence belongs to the histone H1/H5 family.

It localises to the nucleus. The protein resides in the chromosome. This chain is Histone H1.X (hil-1), found in Caenorhabditis elegans.